Reading from the N-terminus, the 367-residue chain is Trans-enoyl reductase ffsC (367 aa).

Residue 55 to 58 participates in NADP(+) binding; sequence CDWK. 143–150 serves as a coordination point for substrate; the sequence is TGIGTLGL. Residues 203–206, Tyr-221, and 268–269 contribute to the NADP(+) site; these read SAKN and LE. 288–292 is a substrate binding site; that stretch reads GMAIL. Residue 357 to 358 participates in NADP(+) binding; that stretch reads VS.

It belongs to the zinc-containing alcohol dehydrogenase family. Monomer.

It participates in mycotoxin biosynthesis. In terms of biological role, trans-enoyl reductase; part of the gene cluster that mediates the biosynthesis of the cytotoxic leucine-containing cytochalasans, including aspochalasin C, aspochalasin E, TMC-169, flavichalasine F, aspergillin PZ, aspochalasin M and flavichalasine G. The first step in the pathway is catalyzed by the hybrid PKS-NRPS ffsA that utilizes 8 units of malonyl-CoA to iteratively assemble the octaketide chain before addition of L-leucine by the C-terminal NRPS modules. Because ffsA lacks a designated enoylreductase (ER) domain, the required activity is provided the enoyl reductase fssC. The methyltransferase (MT) domain of ffsA catalyzes the alpha-methylation at C10 and C14 using S-adenosyl-L-methionine as the methyl-donating cosubstrate. Reduction by the hydrolyase ffsE, followed by dehydration and intra-molecular Diels-Alder cyclization by the Diels-Alderase ffsF then yield the required isoindolone-fused macrocycle. A number of oxidative steps catalyzed by the tailoring cytochrome P450 monooxygenase ffsD, the FAD-linked oxidoreductase ffsJ and the short-chain dehydrogenase/reductase ffsI, are further required to afford the final products. In Aspergillus flavipes, this protein is Trans-enoyl reductase ffsC.